The sequence spans 514 residues: 2,3-bisphosphoglycerate-independent phosphoglycerate mutase (514 aa).

Positions 14 and 64 each coordinate Mn(2+). Catalysis depends on S64, which acts as the Phosphoserine intermediate. Residues H125, R155–D156, R187, R193, R263–R266, and K336 each bind substrate. Mn(2+)-binding residues include D403, H407, D444, H445, and H463.

Belongs to the BPG-independent phosphoglycerate mutase family. As to quaternary structure, monomer. The cofactor is Mn(2+).

The catalysed reaction is (2R)-2-phosphoglycerate = (2R)-3-phosphoglycerate. It participates in carbohydrate degradation; glycolysis; pyruvate from D-glyceraldehyde 3-phosphate: step 3/5. Catalyzes the interconversion of 2-phosphoglycerate and 3-phosphoglycerate. This is 2,3-bisphosphoglycerate-independent phosphoglycerate mutase from Salmonella typhi.